We begin with the raw amino-acid sequence, 376 residues long: 28S rRNA (uridine-N(3))-methyltransferase (376 aa).

Disordered regions lie at residues 1–33 (MAER…EEKK) and 49–71 (AQEE…DRGR). Residues 15–33 (HGQRIEWRKWKQQKKEEKK) are compositionally biased toward basic and acidic residues. Residues T289, R292, G312, N341, and T342 each coordinate S-adenosyl-L-homocysteine. S-adenosyl-L-methionine-binding residues include R292, G312, N341, and T342.

This sequence belongs to the class IV-like SAM-binding methyltransferase superfamily. As to quaternary structure, interacts with INCA1.

The protein localises to the cytoplasm. The protein resides in the cytoskeleton. Its subcellular location is the spindle. It localises to the chromosome. It is found in the centromere. The protein localises to the kinetochore. The protein resides in the microtubule organizing center. Its subcellular location is the centrosome. It carries out the reaction uridine in 28S rRNA + S-adenosyl-L-methionine = N(3)-methyluridine in 28S rRNA + S-adenosyl-L-homocysteine + H(+). S-adenosyl-L-methionine-dependent methyltransferase that specifically methylates the N3 position of a uridine in 28S rRNA. Required for association of the centrosomes with the poles of the bipolar mitotic spindle during metaphase. Also involved in chromosome alignment. May promote centrosome maturation probably by recruiting A-kinase anchor protein AKAP9 to centrosomes in early mitosis. Binds specifically to miRNA MIR145 hairpin, regulates MIR145 expression at a postranscriptional level. In Homo sapiens (Human), this protein is 28S rRNA (uridine-N(3))-methyltransferase.